The chain runs to 457 residues: MQKYISEARLLLALAIPVILAQIAQTAMGFVDTVMAGGYSATDMAAVAIGTSIWLPAILFGHGLLLALTPVIAQLNGSGRRERIAHQVRQGFWLAGFVSVLIMLVLWNAGYIIRSMENIDPALADKAVGYLRALLWGAPGYLFFQVARNQCEGLAKTKPGMVMGFIGLLVNIPVNYIFIYGHFGMPELGGVGCGVATAAVYWVMFLAMVSYIKRARSMRDIRNEKGTAKPDPAVMKRLIQLGLPIALALFFEVTLFAVVALLVSPLGIVDVAGHQIALNFSSLMFVLPMSLAAAVTIRVGYRLGQGSTLDAQTAARTGLMVGVCMATLTAIFTVSLREQIALLYNDNPEVVTLAAHLMLLAAVYQISDSIQVIGSGILRGYKDTRSIFYITFTAYWVLGLPSGYILALTDLVVEPMGPAGFWIGFIIGLTSAAIMMMLRMRFLQRLPSAIILQRAAR.

The next 12 membrane-spanning stretches (helical) occupy residues 11 to 31 (LLALAIPVILAQIAQTAMGFV), 53 to 73 (IWLPAILFGHGLLLALTPVIA), 93 to 113 (WLAGFVSVLIMLVLWNAGYII), 127 to 147 (AVGYLRALLWGAPGYLFFQVA), 160 to 180 (GMVMGFIGLLVNIPVNYIFIY), 189 to 209 (GGVGCGVATAAVYWVMFLAMV), 243 to 263 (LPIALALFFEVTLFAVVALLV), 276 to 296 (IALNFSSLMFVLPMSLAAAVT), 314 to 334 (AARTGLMVGVCMATLTAIFTV), 350 to 370 (VVTLAAHLMLLAAVYQISDSI), 387 to 407 (IFYITFTAYWVLGLPSGYILA), and 418 to 438 (PAGFWIGFIIGLTSAAIMMML).

Belongs to the multi antimicrobial extrusion (MATE) (TC 2.A.66.1) family. MdtK subfamily.

The protein resides in the cell inner membrane. Functionally, multidrug efflux pump that functions probably as a Na(+)/drug antiporter. The sequence is that of Multidrug resistance protein MdtK from Escherichia coli O17:K52:H18 (strain UMN026 / ExPEC).